The following is a 455-amino-acid chain: Chromosomal replication initiator protein DnaA 2 (455 aa).

Residues 1 to 95 form a domain I, interacts with DnaA modulators region; the sequence is MLTCNDCSTW…KRSSPLVTPS (95 aa). Residues 96-112 are domain II; it reads IAKPATEVSEENKDFQL. Residues 113 to 328 are domain III, AAA+ region; that stretch reads KLNGAYRFDN…GAINKLTAYC (216 aa). ATP is bound by residues G157, G159, K160, and T161. Positions 329–455 are domain IV, binds dsDNA; it reads LLFNKPLTET…IAIDSPQHFV (127 aa).

Belongs to the DnaA family. As to quaternary structure, oligomerizes as a right-handed, spiral filament on DNA at oriC.

The protein resides in the cytoplasm. Its function is as follows. Plays an essential role in the initiation and regulation of chromosomal replication. ATP-DnaA binds to the origin of replication (oriC) to initiate formation of the DNA replication initiation complex once per cell cycle. Binds the DnaA box (a 9 base pair repeat at the origin) and separates the double-stranded (ds)DNA. Forms a right-handed helical filament on oriC DNA; dsDNA binds to the exterior of the filament while single-stranded (ss)DNA is stabiized in the filament's interior. The ATP-DnaA-oriC complex binds and stabilizes one strand of the AT-rich DNA unwinding element (DUE), permitting loading of DNA polymerase. After initiation quickly degrades to an ADP-DnaA complex that is not apt for DNA replication. Binds acidic phospholipids. In Chlamydia trachomatis serovar D (strain ATCC VR-885 / DSM 19411 / UW-3/Cx), this protein is Chromosomal replication initiator protein DnaA 2.